We begin with the raw amino-acid sequence, 103 residues long: Methanol dehydrogenase [cytochrome c] subunit 2 (103 aa).

Residues 1 to 20 form the signal peptide; sequence MKRILTLTVAALALGTPALA. Residues cysteine 26 and cysteine 32 are joined by a disulfide bond.

The protein belongs to the methanol dehydrogenase subunit 2 family. In terms of assembly, heterotetramer composed of 2 alpha and 2 beta subunits.

The protein localises to the periplasm. The enzyme catalyses 2 Fe(III)-[cytochrome cL] + a primary alcohol = 2 Fe(II)-[cytochrome cL] + an aldehyde + 2 H(+). Catalyzes the oxidation of primary alcohols including methanol. The protein is Methanol dehydrogenase [cytochrome c] subunit 2 (moxI) of Paracoccus denitrificans.